The following is a 563-amino-acid chain: Mitochondrial distribution and morphology protein 34 (563 aa).

The SMP-LTD domain maps to 1 to 195; that stretch reads MAFNFNWSPL…LPAIIHRLSL (195 aa). Disordered stretches follow at residues 298 to 460 and 535 to 563; these read ERGD…QIPT and RHDK…PKAL. 2 stretches are compositionally biased toward polar residues: residues 303–332 and 346–357; these read AGTT…FSNR and SLVNMNSATTGL. Residues 365-383 are compositionally biased toward basic residues; the sequence is SRSHTTRKKKNRVVNLRKS. Polar residues-rich tracts occupy residues 386 to 402 and 444 to 460; these read TDNV…SITA and PSRS…QIPT.

Belongs to the MDM34 family. As to quaternary structure, component of the ER-mitochondria encounter structure (ERMES) or MDM complex, composed of mmm1, mdm10, mdm12 and mdm34.

The protein localises to the mitochondrion outer membrane. Functionally, component of the ERMES/MDM complex, which serves as a molecular tether to connect the endoplasmic reticulum (ER) and mitochondria. Components of this complex are involved in the control of mitochondrial shape and protein biogenesis, and function in nonvesicular lipid trafficking between the ER and mitochondria. Mdm34 is required for the interaction of the ER-resident membrane protein mmm1 and the outer mitochondrial membrane-resident beta-barrel protein mdm10. This chain is Mitochondrial distribution and morphology protein 34, found in Sclerotinia sclerotiorum (strain ATCC 18683 / 1980 / Ss-1) (White mold).